Here is a 141-residue protein sequence, read N- to C-terminus: Large ribosomal subunit protein uL11 (141 aa).

This sequence belongs to the universal ribosomal protein uL11 family. In terms of assembly, part of the ribosomal stalk of the 50S ribosomal subunit. Interacts with L10 and the large rRNA to form the base of the stalk. L10 forms an elongated spine to which L12 dimers bind in a sequential fashion forming a multimeric L10(L12)X complex. One or more lysine residues are methylated.

In terms of biological role, forms part of the ribosomal stalk which helps the ribosome interact with GTP-bound translation factors. The chain is Large ribosomal subunit protein uL11 from Clostridium perfringens (strain ATCC 13124 / DSM 756 / JCM 1290 / NCIMB 6125 / NCTC 8237 / Type A).